The primary structure comprises 346 residues: MALLKVKFDQKKRVKLAQGLWLMNWLSVLAGIVLFSLGLFLKIELRKRSDVMDNSESHFVPNSLIGVGVLSCVFNSLAGKICYDALDPAKYAKWKPWLKLYLAVCVFFNVILFLVALCCFLLRGSLESTLAYGLKNGMKYYRDTDTPGRCFMKKTIDMLQIEFKCCGNNGFRDWFEIQWISNRYLDFSSKEVKDRIKSNVDGRYLVDGVPFSCCNPSSPRPCIQYQLTNNSAHYSYDHQTEELNLWLRGCRAALLNYYSSLMNSMGVVTLLIWLFEVSITAGLRFLHTALESVSNPEDPECESEGWLLENSVSETWKAFLESFKKLGKSNQVEAEAADAGQAPEAG.

At 1 to 24 the chain is on the cytoplasmic side; sequence MALLKVKFDQKKRVKLAQGLWLMN. The chain crosses the membrane as a helical span at residues 25–43; sequence WLSVLAGIVLFSLGLFLKI. Topologically, residues 44-61 are lumenal; that stretch reads ELRKRSDVMDNSESHFVP. The chain crosses the membrane as a helical span at residues 62 to 80; the sequence is NSLIGVGVLSCVFNSLAGK. Residues 81–99 are Cytoplasmic-facing; sequence ICYDALDPAKYAKWKPWLK. The helical transmembrane segment at 100–123 threads the bilayer; that stretch reads LYLAVCVFFNVILFLVALCCFLLR. Residues 124 to 264 lie on the Lumenal side of the membrane; that stretch reads GSLESTLAYG…LNYYSSLMNS (141 aa). The N-linked (GlcNAc...) asparagine glycan is linked to Asn-229. Residues 265–290 traverse the membrane as a helical segment; it reads MGVVTLLIWLFEVSITAGLRFLHTAL. Topologically, residues 291-346 are cytoplasmic; it reads ESVSNPEDPECESEGWLLENSVSETWKAFLESFKKLGKSNQVEAEAADAGQAPEAG. The interaction with MREG stretch occupies residues 341–346; it reads QAPEAG.

Belongs to the PRPH2/ROM1 family. In terms of assembly, homodimer; disulfide-linked. Forms a homotetramer. Forms a heterotetramer with ROM1. Homotetramer and heterotetramer core complexes go on to form higher order complexes by formation of intermolecular disulfide bonds. Interacts with MREG. Interacts with STX3. Interacts with SNAP25. Retina (photoreceptor). In rim region of ROS (rod outer segment) disks.

The protein resides in the membrane. The protein localises to the cell projection. Its subcellular location is the cilium. It is found in the photoreceptor outer segment. It localises to the photoreceptor inner segment. Its function is as follows. Essential for retina photoreceptor outer segment disk morphogenesis, may also play a role with ROM1 in the maintenance of outer segment disk structure. Required for the maintenance of retinal outer nuclear layer thickness. Required for the correct development and organization of the photoreceptor inner segment. This is Peripherin-2 (Prph2) from Rattus norvegicus (Rat).